We begin with the raw amino-acid sequence, 208 residues long: Large ribosomal subunit protein uL3 (208 aa).

Residues 117-149 are disordered; the sequence is FQGVIKRHGQSRGPMAHGSRYHRRPGSMGPVSP.

It belongs to the universal ribosomal protein uL3 family. Part of the 50S ribosomal subunit. Forms a cluster with proteins L14 and L19.

Its function is as follows. One of the primary rRNA binding proteins, it binds directly near the 3'-end of the 23S rRNA, where it nucleates assembly of the 50S subunit. In Streptococcus equi subsp. equi (strain 4047), this protein is Large ribosomal subunit protein uL3.